The chain runs to 311 residues: Beta-ketoacyl-[acyl-carrier-protein] synthase III (311 aa).

Active-site residues include Cys114 and His238. The ACP-binding stretch occupies residues 239–243 (QANIR). The active site involves Asn268.

Belongs to the thiolase-like superfamily. FabH family. As to quaternary structure, homodimer.

The protein localises to the cytoplasm. It catalyses the reaction malonyl-[ACP] + acetyl-CoA + H(+) = 3-oxobutanoyl-[ACP] + CO2 + CoA. Its pathway is lipid metabolism; fatty acid biosynthesis. Catalyzes the condensation reaction of fatty acid synthesis by the addition to an acyl acceptor of two carbons from malonyl-ACP. Catalyzes the first condensation reaction which initiates fatty acid synthesis and may therefore play a role in governing the total rate of fatty acid production. Possesses both acetoacetyl-ACP synthase and acetyl transacylase activities. Its substrate specificity determines the biosynthesis of branched-chain and/or straight-chain of fatty acids. The sequence is that of Beta-ketoacyl-[acyl-carrier-protein] synthase III from Neorickettsia sennetsu (strain ATCC VR-367 / Miyayama) (Ehrlichia sennetsu).